Here is a 336-residue protein sequence, read N- to C-terminus: F420-dependent glucose-6-phosphate dehydrogenase (336 aa).

Asp-39 contributes to the coenzyme F420-(gamma-Glu)n binding site. The active-site Proton donor is the His-40. Residues Thr-76 and 107-108 contribute to the coenzyme F420-(gamma-Glu)n site; that span reads TG. Glu-109 (proton acceptor) is an active-site residue. Coenzyme F420-(gamma-Glu)n contacts are provided by residues Asn-112, 177 to 178, and 180 to 181; these read GG and LV. Substrate is bound by residues Thr-195, Lys-198, Lys-259, and Arg-283.

Belongs to the F420-dependent glucose-6-phosphate dehydrogenase family. Homodimer.

It catalyses the reaction oxidized coenzyme F420-(gamma-L-Glu)(n) + D-glucose 6-phosphate + H(+) = 6-phospho-D-glucono-1,5-lactone + reduced coenzyme F420-(gamma-L-Glu)(n). Its function is as follows. Catalyzes the coenzyme F420-dependent oxidation of glucose 6-phosphate (G6P) to 6-phosphogluconolactone. The protein is F420-dependent glucose-6-phosphate dehydrogenase of Nocardia farcinica (strain IFM 10152).